The chain runs to 925 residues: Antiviral innate immune response receptor RIG-I (925 aa).

CARD domains follow at residues 1-87 and 92-172; these read MTTE…GLYE and WDFK…KTLK. Serine 8 is subject to (Microbial infection) Phosphoserine. At serine 8 the chain carries Phosphoserine. Residues lysine 48, lysine 96, lysine 154, and lysine 164 each participate in a glycyl lysine isopeptide (Lys-Gly) (interchain with G-Cter in ubiquitin) cross-link. Threonine 170 is subject to Phosphothreonine. Glycyl lysine isopeptide (Lys-Gly) (interchain with G-Cter in ubiquitin) cross-links involve residues lysine 172, lysine 181, lysine 193, and lysine 203. The tract at residues 218 to 925 is interaction with ZC3HAV1; the sequence is ECQNLSENSC…IPFDPAEMSK (708 aa). Positions 251–430 constitute a Helicase ATP-binding domain; it reads ALPAMKGKNT…DEALDYICKL (180 aa). Position 264–271 (264–271) interacts with ATP; that stretch reads APTGCGKT. The DECH box signature appears at 372–375; the sequence is DECH. Asparagine 495 and asparagine 549 each carry (Microbial infection) Deamidated asparagine; by herpes simplex virus 1/HHV-1 UL37. The Helicase C-terminal domain occupies 610–776; sequence KLEDLCFILQ…RLQTWDEAVF (167 aa). The segment at 735 to 925 is mediates interaction with RNF135; it reads GSKCFLLTSN…IPFDPAEMSK (191 aa). Threonine 770 bears the Phosphothreonine; by CK2 mark. In terms of domain architecture, RLR CTR spans 794-925; it reads QEKPKPVPDK…IPFDPAEMSK (132 aa). A Zn(2+)-binding site is contributed by cysteine 810. Lysine 812 is covalently cross-linked (Glycyl lysine isopeptide (Lys-Gly) (interchain with G-Cter in ubiquitin)). Zn(2+) is bound at residue cysteine 813. Phosphoserine; by CK2 is present on residues serine 854 and serine 855. Position 858 is an N6-acetyllysine (lysine 858). Residues cysteine 864 and cysteine 869 each contribute to the Zn(2+) site. Lysine 909 carries the N6-acetyllysine modification.

The protein belongs to the helicase family. RLR subfamily. Monomer; maintained as a monomer in an autoinhibited state. Upon binding of viral RNAs and conformational shift, homooligomerizes and forms filaments on these molecules. Interacts (via tandem CARD domain) with MAVS/IPS1 promoting its filamentation. Interacts with DHX58/LGP2, IKBKE, TBK1 and STING1. Interacts (via CARD domain) with TRIM25 (via SPRY domain). Interacts (double-stranded RNA-bound oligomeric form) with RNF135 (homodimer); involved in RNA length-dependent activation of the RIG-I signaling pathway. Interacts with CYLD. Interacts with NLRC5; blocks the interaction of MAVS/IPS1 to RIGI. Interacts with SRC. Interacts with DDX60. Interacts with isoform 2 of ZC3HAV1 (via zinc-fingers) in an RNA-dependent manner. Interacts (via tandem CARD domain) with SEC14L1; the interaction is direct and impairs the interaction of RIGI with MAVS/IPS1. Interacts with VCP/p97; interaction is direct and allows the recruitment of RNF125 and subsequent ubiquitination and degradation. Interacts with NOP53; may regulate RIGI through USP15-mediated 'Lys-63'-linked deubiquitination. Interacts with SIGLEC10, CBL and PTPN11; within a negative feedback loop leading to RIGI degradation. Interacts with LRRC25. Interacts with ZCCHC3; leading to activation of RIGI. Interacts with RNF123. Interacts with UBE2D3 and UBE2N; E2 ubiquitin ligases involved in RNF135-mediated ubiquitination of RIGI and activation of the RIG-I signaling pathway. Interacts with IFIT3. Interacts with DDX3X. Interacts with RTN3. Interacts with ARL16; this interaction is GTP-dependent and induced upon viral infection; this interaction suppresses the RNA sensing activity of RIGI. Interacts with DHX16; this interaction enhances RIGI-mediated antiviral response. Interacts with IRGM; promoting RIGI degradation. Interacts with IFI6; this interaction inhibits RIGI activation. Interacts with ECSIT; this interaction bridges RIGI to the MAVS complex at the mitochondrion. Interacts with YWHAE; this interaction drives RIGI at the mitochondrion. In terms of assembly, (Microbial infection) Interacts with protein Z of Guanarito virus, Machupo virus, Junin arenavirus and Sabia virus. This interaction disrupts its interaction with MAVS/IPS1, impeding downstream IRF3 and NF-kappa-B activation and resulting in decreased IFN-beta induction. As to quaternary structure, (Microbial infection) Interacts (via CARD domain) with Human respiratory syncytial virus A non-structural protein 2 (NS2) and this interaction disrupts its interaction with MAVS/IPS1, impeding downstream IRF3 activation. (Microbial infection) Interacts with Rotavirus A non-structural protein 1 (NSP1) and this interaction induces down-regulation of RIGI. In terms of assembly, (Microbial infection) Interacts with paramyxoviruses (Sendai virus, Nipah virus, Measles virus and Parainfluenza virus 5) protein V; this interaction inhibits TRIM25-mediated ubiquitination of RIG-I and prevents downstream RIG-I signaling thereby inhibiting the IFN responses. As to quaternary structure, (Microbial infection) Interacts with herpes simplex virus 1 protein US11; this interaction prevents the interaction of MAVS/IPS1 to RIGI. (Microbial infection) Interacts with herpes simplex virus 1 protein UL37; this interaction deaminates RIGI and inhibits its activation. In terms of assembly, (Microbial infection) Interacts with Severe fever with thrombocytopenia virus (SFTSV) NSs; this interaction this interaction sequesters RIGI in NSs-induced cytoplasmic inclusion bodies thereby inhibiting the IFN responses. Post-translationally, phosphorylated in resting cells and dephosphorylated in RNA virus-infected cells. Phosphorylation at Thr-770, Ser-854 and Ser-855 results in inhibition of its activity while dephosphorylation at these sites results in its activation. In terms of processing, ubiquitinated. 'Lys-63' ubiquitination by RNF135, which occurs after RNA-binding and homodimerization, releases the autoinhibition of the CARD domains by the RLR CTR domain, an essential step in the activation of the RIG-I signaling pathway. Lys-172 is the critical site of ubiquitination for MAVS/IPS1 binding and to induce anti-viral signal transduction. Lys-154, Lys-164 and Lys-172 are shared sites for RNF135-mediated and TRIM4-mediated ubiquitination. Also undergoes 'Lys-48' ubiquitination at Lys-181 by RNF125 that leads to proteasomal degradation. 'Lys-48' ubiquitination follows viral infection and is enhanced by 'Lys-63'-linked ubiquitination of the CARD domains that promotes interaction with VCP/p97 and subsequent recruitment of RNF125. Within a negative feedback loop involving SIGLEC10 and PTPN11, 'Lys-48' ubiquitination at Lys-812 by CBL also elicits the proteasomal degradation of RIGI. Deubiquitinated by CYLD, a protease that selectively cleaves 'Lys-63'-linked ubiquitin chains. Also probably deubiquitinated by USP17L2/USP17 that cleaves 'Lys-48'- and 'Lys-63'-linked ubiquitin chains and positively regulates the receptor. Ubiquitinated by TRIM40 via 'Lys-48'-linked ubiquitination; leading to proteasomal degradation. Deubiquitinated by USP27X that cleaves 'Lys-63'-linked ubiquitin chains and inhibits the innate immune receptor activity. Deubiquitinated by USP3 that also cleaves 'Lys-63'-linked ubiquitin chains and inhibits the innate immune receptor activity. Undergoes 'Lys-48'-linked ubiquitination catalyzed by MARCHF5 at Lys-193 and Lys-203, leading to proteasomal degradation. Phosphorylated at Ser-8 and Thr-170; these phosphorylations suppresse the TRIM25-mediated 'Lys-63'-linked ubiquitination of RIG-I and thereby prevents RIG-I downstream signaling. Dephosphorylated by phosphatases PPP1CA/PPP1CC; this step is essential to activate RIGI and initiate downstream signaling. Post-translationally, ISGylated. Conjugated to ubiquitin-like protein ISG15 upon IFN-beta stimulation. ISGylation negatively regulates its function in antiviral signaling response. In terms of processing, sumoylated, probably by MUL1; inhibiting its polyubiquitination. Acetylated in response to RNA virus infection. Deacetylated by HDAC6 in the presence of viral mRNAs which is required for detection of viral RNA by RIGI. Post-translationally, (Microbial infection) Deamidated on Asn-495 and Asn-549 by herpes simplex virus 1 protein UL37. These modifications eliminate RIGI detection of viral RNA and restriction of viral replication. In terms of processing, degraded via selective autophagy following interaction with IRGM. IRGM promotes RIGI recruitment to autophagosome membranes, promoting its SQSTM1/p62-dependent autophagic degradation. (Microbial infection) Cleaved by the protease 3C of coxsackievirus B3, poliovirus and enterovirus 71 allowing the virus to disrupt the host type I interferon production. Post-translationally, (Microbial infection) Phosphorylated at Ser-8 by herpes simplex virus 1 protein US3 leading to inhibition of critical RIGI activation steps. As to expression, present in vascular smooth cells (at protein level).

Its subcellular location is the cytoplasm. It localises to the cell projection. It is found in the ruffle membrane. The protein localises to the cytoskeleton. The protein resides in the cell junction. Its subcellular location is the tight junction. It carries out the reaction ATP + H2O = ADP + phosphate + H(+). Its function is as follows. Innate immune receptor that senses cytoplasmic viral nucleic acids and activates a downstream signaling cascade leading to the production of type I interferons and pro-inflammatory cytokines. Forms a ribonucleoprotein complex with viral RNAs on which it homooligomerizes to form filaments. The homooligomerization allows the recruitment of RNF135 an E3 ubiquitin-protein ligase that activates and amplifies the RIG-I-mediated antiviral signaling in an RNA length-dependent manner through ubiquitination-dependent and -independent mechanisms. Upon activation, associates with mitochondria antiviral signaling protein (MAVS/IPS1) that activates the IKK-related kinases TBK1 and IKBKE which in turn phosphorylate the interferon regulatory factors IRF3 and IRF7, activating transcription of antiviral immunological genes including the IFN-alpha and IFN-beta interferons. Ligands include 5'-triphosphorylated ssRNAs and dsRNAs but also short dsRNAs (&lt;1 kb in length). In addition to the 5'-triphosphate moiety, blunt-end base pairing at the 5'-end of the RNA is very essential. Overhangs at the non-triphosphorylated end of the dsRNA RNA have no major impact on its activity. A 3'overhang at the 5'triphosphate end decreases and any 5'overhang at the 5' triphosphate end abolishes its activity. Detects both positive and negative strand RNA viruses including members of the families Paramyxoviridae: Human respiratory syncytial virus and measles virus (MeV), Rhabdoviridae: vesicular stomatitis virus (VSV), Orthomyxoviridae: influenza A and B virus, Flaviviridae: Japanese encephalitis virus (JEV), hepatitis C virus (HCV), dengue virus (DENV) and west Nile virus (WNV). It also detects rotaviruses and reoviruses. Detects and binds to SARS-CoV-2 RNAs which is inhibited by m6A RNA modifications. Also involved in antiviral signaling in response to viruses containing a dsDNA genome such as Epstein-Barr virus (EBV). Detects dsRNA produced from non-self dsDNA by RNA polymerase III, such as Epstein-Barr virus-encoded RNAs (EBERs). May play important roles in granulocyte production and differentiation, bacterial phagocytosis and in the regulation of cell migration. In Homo sapiens (Human), this protein is Antiviral innate immune response receptor RIG-I.